The following is a 429-amino-acid chain: Mannose-6-phosphate isomerase (429 aa).

The Zn(2+) site is built by Q110, H112, E137, and H282. Residue R301 is part of the active site.

It belongs to the mannose-6-phosphate isomerase type 1 family. Zn(2+) is required as a cofactor.

Its subcellular location is the cytoplasm. It catalyses the reaction D-mannose 6-phosphate = D-fructose 6-phosphate. It participates in nucleotide-sugar biosynthesis; GDP-alpha-D-mannose biosynthesis; alpha-D-mannose 1-phosphate from D-fructose 6-phosphate: step 1/2. Involved in the synthesis of the GDP-mannose and dolichol-phosphate-mannose required for a number of critical mannosyl transfer reactions. This is Mannose-6-phosphate isomerase (PMI1) from Candida glabrata (strain ATCC 2001 / BCRC 20586 / JCM 3761 / NBRC 0622 / NRRL Y-65 / CBS 138) (Yeast).